The primary structure comprises 242 residues: Venom nerve growth factor 2 (242 aa).

Residues 1–18 (MSMLCYTLIIAFLIGIWA) form the signal peptide. Positions 19 to 125 (APKSEDNVPL…ALNRNIRSKR (107 aa)) are excised as a propeptide. A disordered region spans residues 46-69 (KALKTSRNTDQRHPAPKKAEDQEL). Basic and acidic residues predominate over residues 52-66 (RNTDQRHPAPKKAED). 3 cysteine pairs are disulfide-bonded: C139–C203, C181–C231, and C191–C233. N147 carries N-linked (GlcNAc...) asparagine glycosylation.

It belongs to the NGF-beta family. As to quaternary structure, homodimer; non-covalently linked. Expressed by the venom gland.

It localises to the secreted. Its function is as follows. Nerve growth factor is important for the development and maintenance of the sympathetic and sensory nervous systems. It stimulates division and differentiation of sympathetic and embryonic sensory neurons as well as basal forebrain cholinergic neurons in the brain. Its relevance in the snake venom is not clear. However, it has been shown to inhibit metalloproteinase-dependent proteolysis of platelet glycoprotein Ib alpha, suggesting a metalloproteinase inhibition to prevent metalloprotease autodigestion and/or protection against prey proteases. Binds a lipid between the two protein chains in the homodimer. The lipid-bound form promotes histamine relase from mouse mast cells, contrary to the lipid-free form. The chain is Venom nerve growth factor 2 from Demansia vestigiata (Lesser black whip snake).